The following is a 102-amino-acid chain: MAKQKIRIRLKAYDHRVIDQSAEKIVETAKRSGADVSGPIPLPTEKSVYTIIRAVHMYKDSREQFEQRTHKRLIDIVNPTPKTVDALMGLNLPSGVDIEIKL.

It belongs to the universal ribosomal protein uS10 family. In terms of assembly, part of the 30S ribosomal subunit.

Its function is as follows. Involved in the binding of tRNA to the ribosomes. This Staphylococcus aureus (strain Mu3 / ATCC 700698) protein is Small ribosomal subunit protein uS10.